A 465-amino-acid polypeptide reads, in one-letter code: tRNA modification GTPase MnmE (465 aa).

(6S)-5-formyl-5,6,7,8-tetrahydrofolate is bound by residues Arg-21, Glu-85, and Lys-124. Positions 220 to 387 (GVPVAIIGET…LQKMLINAAH (168 aa)) constitute a TrmE-type G domain. Residue Asn-230 participates in K(+) binding. Residues 230 to 235 (NAGKST), 249 to 255 (SDIHGTT), 274 to 277 (DTAG), and 337 to 340 (NKAD) each bind GTP. Position 234 (Ser-234) interacts with Mg(2+). Residues Ser-249, Ile-251, and Thr-254 each coordinate K(+). Thr-255 serves as a coordination point for Mg(2+). Lys-465 is a (6S)-5-formyl-5,6,7,8-tetrahydrofolate binding site.

It belongs to the TRAFAC class TrmE-Era-EngA-EngB-Septin-like GTPase superfamily. TrmE GTPase family. In terms of assembly, homodimer. Heterotetramer of two MnmE and two MnmG subunits. It depends on K(+) as a cofactor.

It localises to the cytoplasm. Its function is as follows. Exhibits a very high intrinsic GTPase hydrolysis rate. Involved in the addition of a carboxymethylaminomethyl (cmnm) group at the wobble position (U34) of certain tRNAs, forming tRNA-cmnm(5)s(2)U34. The polypeptide is tRNA modification GTPase MnmE (Bacteroides thetaiotaomicron (strain ATCC 29148 / DSM 2079 / JCM 5827 / CCUG 10774 / NCTC 10582 / VPI-5482 / E50)).